The following is a 216-amino-acid chain: Urease operon 23 kDa accessory protein (216 aa).

Involved in the expression of hydrogenase activity. May be a regulatory gene affecting the expression of the hydrogenase operon or could be involved in the process of nickel incorporation into the hydrogenase apoenzyme. The protein is Urease operon 23 kDa accessory protein of Rhizobium meliloti (strain 1021) (Ensifer meliloti).